Reading from the N-terminus, the 398-residue chain is Exodeoxyribonuclease 7 large subunit (398 aa).

It belongs to the XseA family. In terms of assembly, heterooligomer composed of large and small subunits.

The protein resides in the cytoplasm. It carries out the reaction Exonucleolytic cleavage in either 5'- to 3'- or 3'- to 5'-direction to yield nucleoside 5'-phosphates.. Functionally, bidirectionally degrades single-stranded DNA into large acid-insoluble oligonucleotides, which are then degraded further into small acid-soluble oligonucleotides. This is Exodeoxyribonuclease 7 large subunit from Anaplasma phagocytophilum (strain HZ).